Here is a 255-residue protein sequence, read N- to C-terminus: tRNA (guanine-N(1)-)-methyltransferase (255 aa).

S-adenosyl-L-methionine contacts are provided by residues glycine 113 and 133–138; that span reads VGDFVL.

It belongs to the RNA methyltransferase TrmD family. As to quaternary structure, homodimer.

Its subcellular location is the cytoplasm. The catalysed reaction is guanosine(37) in tRNA + S-adenosyl-L-methionine = N(1)-methylguanosine(37) in tRNA + S-adenosyl-L-homocysteine + H(+). In terms of biological role, specifically methylates guanosine-37 in various tRNAs. This chain is tRNA (guanine-N(1)-)-methyltransferase, found in Francisella philomiragia subsp. philomiragia (strain ATCC 25017 / CCUG 19701 / FSC 153 / O#319-036).